A 492-amino-acid chain; its full sequence is Lipopolysaccharide biosynthesis protein WzxC (492 aa).

Residues 1-12 are Cytoplasmic-facing; that stretch reads MSLREKTISGAK. Residues 13 to 33 traverse the membrane as a helical segment; the sequence is WSAIATVIIIGLGLVQMTVLA. The Periplasmic segment spans residues 34–42; sequence RIIDNHQFG. The chain crosses the membrane as a helical span at residues 43–63; the sequence is LLTVSLVIIALADTLSDFGIA. Residues 64 to 81 lie on the Cytoplasmic side of the membrane; sequence NSIIQRKEISHLELTTLY. Residues 82-102 traverse the membrane as a helical segment; that stretch reads WLNVGLGIVVCVAVFLLSDLI. The Periplasmic segment spans residues 103 to 104; that stretch reads GD. Residues 105-125 traverse the membrane as a helical segment; the sequence is VLNNPDLAPLIKTLSLAFVVI. Over 126-157 the chain is Cytoplasmic; it reads PHGQQFRALMQKELEFNKIGMIETSAVLAGFT. The chain crosses the membrane as a helical span at residues 158-178; the sequence is CTVVSAHFWPLAMTAILGYLV. The Periplasmic segment spans residues 179–236; it reads NSAVRTLLFGYFGRKIYRPGLHFSLASVAPNLRFGAWLTADSIINYLNTNLSTLVLAR. The chain crosses the membrane as a helical span at residues 237 to 257; that stretch reads ILGAGVAGGYNLAYNVAVVPP. Residues 258-288 are Cytoplasmic-facing; sequence MKLNPIITRVLFPAFAKIQDDTEKLRVNFYK. The chain crosses the membrane as a helical span at residues 289–309; it reads LLSVVGIINFPALLGLMVVSN. Topologically, residues 310 to 322 are periplasmic; it reads NFVPLVFGEKWNS. Residues 323 to 343 form a helical membrane-spanning segment; that stretch reads IIPVLQLLCVVGLLRSVGNPI. Over 344 to 364 the chain is Cytoplasmic; the sequence is GSLLMAKARVDISFKFNVFKT. A helical membrane pass occupies residues 365–385; it reads FLFIPAIVIGGQMAGAIGVTL. Residue G386 is a topological domain, periplasmic. Residues 387 to 407 traverse the membrane as a helical segment; the sequence is FLLVQIINTILSYFVMIKPVL. The Cytoplasmic segment spans residues 408–417; it reads GSSYRQYILS. The helical transmembrane segment at 418–438 threads the bilayer; sequence LWLPFYLSLPTLVVSYALGIV. Topologically, residues 439–445 are periplasmic; it reads LKGQLAL. The helical transmembrane segment at 446 to 466 threads the bilayer; the sequence is GMLLAVQIATGVLAFVVMIVL. At 467–492 the chain is on the cytoplasmic side; that stretch reads SRHPLVVEVKRQFCRSEKMKMLLRAG.

It belongs to the polysaccharide synthase family.

It is found in the cell inner membrane. The protein operates within bacterial outer membrane biogenesis; lipopolysaccharide biosynthesis. This Escherichia coli (strain K12) protein is Lipopolysaccharide biosynthesis protein WzxC (wzxC).